Consider the following 120-residue polypeptide: Large ribosomal subunit protein uL18 (120 aa).

It belongs to the universal ribosomal protein uL18 family. In terms of assembly, part of the 50S ribosomal subunit; part of the 5S rRNA/L5/L18/L25 subcomplex. Contacts the 5S and 23S rRNAs.

Its function is as follows. This is one of the proteins that bind and probably mediate the attachment of the 5S RNA into the large ribosomal subunit, where it forms part of the central protuberance. The protein is Large ribosomal subunit protein uL18 of Rhodopseudomonas palustris (strain BisB5).